A 233-amino-acid chain; its full sequence is ATP-dependent Clp protease proteolytic subunit 1 (233 aa).

Ser-116 serves as the catalytic Nucleophile. Residue His-141 is part of the active site.

Belongs to the peptidase S14 family. As to quaternary structure, fourteen ClpP subunits assemble into 2 heptameric rings which stack back to back to give a disk-like structure with a central cavity, resembling the structure of eukaryotic proteasomes.

It is found in the cytoplasm. The catalysed reaction is Hydrolysis of proteins to small peptides in the presence of ATP and magnesium. alpha-casein is the usual test substrate. In the absence of ATP, only oligopeptides shorter than five residues are hydrolyzed (such as succinyl-Leu-Tyr-|-NHMec, and Leu-Tyr-Leu-|-Tyr-Trp, in which cleavage of the -Tyr-|-Leu- and -Tyr-|-Trp bonds also occurs).. Cleaves peptides in various proteins in a process that requires ATP hydrolysis. Has a chymotrypsin-like activity. Plays a major role in the degradation of misfolded proteins. The protein is ATP-dependent Clp protease proteolytic subunit 1 of Salinibacter ruber (strain DSM 13855 / M31).